The sequence spans 733 residues: MRNILLCENMTKVQKEVRCDHCGTSQGSKSVFSGQKVFLGRKITDVLETITHRSIPSSLPIKICFVCTSTFMSSAALIEKVRETVDRVQEQPAKKTKVAEIEEPSTQESDKKAVKVPKKNTTLRQRSKSIAAFPPSFVNGANTNTEIEIISASPKKLDKTPKKQISRLFEDNLNDSVKLTPAKEVSSTKKAFLNLFGNGGNDAIEVLTESEEEEDSDKGPITINTNNFQCPECEFHAKFPKPYKEHLQKEHGLQRPRIYPCTLCIKTFGVLKTLKNHLRDTHSRTFESEAKTKAKESKEKEAKSGAKNKIDAKAKETNAVSQRKKPKEKKSKEKKTEIKCNVETKVVDEIDDQVNNKKGTDSEDADQTQATKIASFKALNESLMKKRMLENVIDSEYTFAINGSSASTPRADSNNFQCEICDCELMTAKQMQEHMKTVHSIDKPKVFKCHVCEKSLATKQSLKTHMTLHADGAEAPNSSKRKILQDEDEDVDILGTTQIENTAEKVEGPKKSQQSPTKAAKFTNRKILQEEDEVVEIVDAFKTDNTAEDDEGPAEEKIIRSRNNIQHQVDGGMIAPRSPAKKTKKTSHVDLSVSTTNGNSPAKSEKRKKQDKSEDTLPSSDVDIVEEINYNVRPHKKARLESIGDSTADESTLSCDRCGKFVKSRQRLDSHMEKKHAAKLQCTLCKEVYQNQMDYVAHFSNCGSEGGLPCGVANCKKVFTEANFLSSHLRKRH.

Residues 17-91 (VRCDHCGTSQ…RETVDRVQEQ (75 aa)) form the ZAD domain. 4 residues coordinate Zn(2+): cysteine 19, cysteine 22, cysteine 64, and cysteine 67. Residues 90 to 100 (EQPAKKTKVAE) are compositionally biased toward basic and acidic residues. The segment at 90 to 121 (EQPAKKTKVAEIEEPSTQESDKKAVKVPKKNT) is disordered. Phosphoserine occurs at positions 109, 153, and 176. Phosphothreonine is present on residues threonine 180 and threonine 188. 2 C2H2-type zinc fingers span residues 228-251 (FQCPECEFHAKFPKPYKEHLQKEH) and 259-282 (YPCTLCIKTFGVLKTLKNHLRDTH). The span at 285-316 (TFESEAKTKAKESKEKEAKSGAKNKIDAKAKE) shows a compositional bias: basic and acidic residues. Residues 285–336 (TFESEAKTKAKESKEKEAKSGAKNKIDAKAKETNAVSQRKKPKEKKSKEKKT) form a disordered region. C2H2-type zinc fingers lie at residues 416-439 (FQCEICDCELMTAKQMQEHMKTVH) and 447-469 (FKCHVCEKSLATKQSLKTHMTLH). Disordered regions lie at residues 499-525 (IENTAEKVEGPKKSQQSPTKAAKFTNR) and 540-622 (AFKT…SSDV). Polar residues predominate over residues 592–602 (SVSTTNGNSPA). Phosphoserine occurs at positions 600, 642, and 646. A Phosphothreonine modification is found at threonine 647. 2 C2H2-type zinc fingers span residues 653-676 (LSCDRCGKFVKSRQRLDSHMEKKH) and 708-733 (LPCGVANCKKVFTEANFLSSHLRKRH). At serine 654 the chain carries Phosphoserine.

Belongs to the krueppel C2H2-type zinc-finger protein family.

It localises to the nucleus. It is found in the nucleolus. In terms of biological role, required for rDNA copy number maintenance and non-random sister chromatid segregation (NRSS) following unequal sister chromatid exchange. Binds ribosomal DNA (rDNA) preferentially binding to intergenic spacers (IGS) regions on both X and Y chromosomes. Essential for NRSS, a mechanism which contributes to the recovery and maintenance of inherently unstable rDNA copy numbers so that the integrity of the germline genome is upheld over generations and germline immortality is sustained. May be involved in transcriptional regulation. The chain is Zinc finger protein indra from Drosophila melanogaster (Fruit fly).